A 1269-amino-acid chain; its full sequence is Multifunctional 2-oxoglutarate metabolism enzyme (1269 aa).

Residues 1–41 are 2-oxoglutarate dehydrogenase E1, N-terminal part; the sequence is MSSSPSPFGQNEWLVEEMYRKFREDPSSVDPSWHEFLVDYN. Residues 23–37 show a composition bias toward basic and acidic residues; sequence REDPSSVDPSWHEFL. Residues 23 to 145 form a disordered region; sequence REDPSSVDPS…AQPADDSDQN (123 aa). The linker stretch occupies residues 42–107; the sequence is PEPTTDSSAS…SKPQAKAKPA (66 aa). The span at 43-58 shows a compositional bias: polar residues; the sequence is EPTTDSSASENGQQTR. Residues 63-75 are compositionally biased toward pro residues; the sequence is KAPPEPAPAPAPK. Residues 108–378 form a succinyltransferase E2 region; sequence ESKSSTKPAD…LRTVHQLLLS (271 aa). The active-site Proton acceptor; for succinyltransferase activity is His357. A 2-oxoglutarate dehydrogenase E1, C-terminal part region spans residues 379–1269; that stretch reads DDFFDEIFRE…QEILDEAFAP (891 aa). Arg583 contributes to the thiamine diphosphate binding site. 2-oxoglutarate-binding residues include His622 and Ser647. Thiamine diphosphate-binding residues include Ser647, Leu649, Asp686, Ala687, Ala688, and Asn719. Asp686 contacts Mg(2+). Mg(2+) is bound by residues Asn719 and Ile721. Residues 824-855 adopt a coiled-coil conformation; sequence DISMKEAEDALRDYQGQLEQVFNEVRELEKHE. His1061 is a binding site for 2-oxoglutarate. The acetyl-CoA site is built by Thr1079, Arg1095, Lys1130, Ser1133, Gln1183, Arg1190, and Arg1191.

Belongs to the 2-oxoacid dehydrogenase family. Kgd subfamily. As to quaternary structure, homodimer. The 2-oxoglutarate dehydrogenase (ODH) complex contains multiple copies of three enzymatic components: 2-oxoglutarate dehydrogenase (E1), dihydrolipoamide succinyltransferase (E2) and lipoamide dehydrogenase (E3). Mg(2+) is required as a cofactor. Thiamine diphosphate serves as cofactor.

It catalyses the reaction glyoxylate + 2-oxoglutarate + H(+) = 2-hydroxy-3-oxoadipate + CO2. It carries out the reaction 2-oxoglutarate + H(+) = succinate semialdehyde + CO2. The enzyme catalyses N(6)-[(R)-lipoyl]-L-lysyl-[protein] + 2-oxoglutarate + H(+) = N(6)-[(R)-S(8)-succinyldihydrolipoyl]-L-lysyl-[protein] + CO2. The catalysed reaction is N(6)-[(R)-dihydrolipoyl]-L-lysyl-[protein] + succinyl-CoA = N(6)-[(R)-S(8)-succinyldihydrolipoyl]-L-lysyl-[protein] + CoA. It functions in the pathway carbohydrate metabolism; tricarboxylic acid cycle; succinate from 2-oxoglutarate (transferase route): step 1/2. Its pathway is carbohydrate metabolism; tricarboxylic acid cycle; succinyl-CoA from 2-oxoglutarate (dehydrogenase route): step 1/1. Its activity is regulated as follows. Alpha-ketoglutarate dehydrogenase and decarboxylase activities are inhibited by unphosphorylated GarA, and allosterically activated by acetyl-CoA, the main substrate of the TCA cycle. Functionally, shows three enzymatic activities that share a first common step, the attack of thiamine-PP on 2-oxoglutarate (alpha-ketoglutarate, KG), leading to the formation of an enamine-thiamine-PP intermediate upon decarboxylation. Thus, displays KGD activity, catalyzing the decarboxylation from five-carbon 2-oxoglutarate to four-carbon succinate semialdehyde (SSA). Also catalyzes C-C bond formation between the activated aldehyde formed after decarboxylation of alpha-ketoglutarate and the carbonyl of glyoxylate (GLX), to yield 2-hydroxy-3-oxoadipate (HOA), which spontaneously decarboxylates to form 5-hydroxylevulinate (HLA). And is also a component of the 2-oxoglutarate dehydrogenase (ODH) complex, that catalyzes the overall conversion of 2-oxoglutarate to succinyl-CoA and CO(2). The KG decarboxylase and KG dehydrogenase reactions provide two alternative, tightly regulated, pathways connecting the oxidative and reductive branches of the TCA cycle. This chain is Multifunctional 2-oxoglutarate metabolism enzyme (kgd), found in Mycobacterium sp. (strain KMS).